Reading from the N-terminus, the 165-residue chain is Regulator of ribonuclease activity A (165 aa).

It belongs to the RraA family. In terms of assembly, homotrimer. Binds to both RNA-binding sites in the C-terminal region of Rne and to RhlB.

Its subcellular location is the cytoplasm. Globally modulates RNA abundance by binding to RNase E (Rne) and regulating its endonucleolytic activity. Can modulate Rne action in a substrate-dependent manner by altering the composition of the degradosome. Modulates RNA-binding and helicase activities of the degradosome. The chain is Regulator of ribonuclease activity A from Actinobacillus pleuropneumoniae serotype 5b (strain L20).